The sequence spans 230 residues: MSDHKTLIKNGMWANNPALVQLLGLCPLLAVSSTVTNALGLGIATLLVLVGSNVSVSLVRNHVPKEVRIPVFVMIIASLVTCVQLLMNAYAYGLYLSLGIFIPLIVTNCIIIGRAEAFASKNEVLPAAQDGFWMGLGMTSVLVVLGAMREIIGNGTLFDGADLLLGDWASVLRIQIFQFDNSFLLALLPPGAFIGVGFLIALKNIIDNQAKSRQPKQEKPVIERARVTNA.

The next 6 helical transmembrane spans lie at 11–31 (GMWA…LLAV), 39–59 (LGLG…VSLV), 69–89 (IPVF…LMNA), 93–113 (GLYL…IIIG), 132–152 (FWMG…REII), and 182–202 (SFLL…LIAL).

This sequence belongs to the NqrDE/RnfAE family. As to quaternary structure, the complex is composed of six subunits: RnfA, RnfB, RnfC, RnfD, RnfE and RnfG.

The protein resides in the cell inner membrane. Functionally, part of a membrane-bound complex that couples electron transfer with translocation of ions across the membrane. The protein is Ion-translocating oxidoreductase complex subunit E of Vibrio atlanticus (strain LGP32) (Vibrio splendidus (strain Mel32)).